The following is a 427-amino-acid chain: MILKQAILTLVLVNANLFAQEPPKTYSSTDKETRQGPPKPPMGKRWVLNPDFSDEFNGTELDTTKWLDHHPTWIGRAPGLFMSSQVSVGDGFLKMEGKKLEKDTIVHAYGKDITFNIAGAAVVSKKATKFGYYECRVKAAATTMSTTFWFSSSNNFKGPKDCDRYGLEWDIHESIGREGDFNGSYFASGMHSNAHFWYTDCNGKKYDHRAPQVKFEDAKLTSEDFNVYGGWWRDESTASYYYNNRPPKHQKFYDKVKKKPFDQPMYMRLVNETYPFPWIELPNAEELSDPSKNTVYYDWVRAYRLVDVNDPNSEVEKDPTLKLYHENVTFPSATIEHKRSKSLEIPLSYQANEDREIAFILFDNEGKKIKEAILTAYAGYANLEYTLQLDQKLPLGSPYKLSAHIRPLKGNKKNSLDESTVYIHLTK.

Positions 1 to 19 (MILKQAILTLVLVNANLFA) are cleaved as a signal peptide. The interval 23-45 (PKTYSSTDKETRQGPPKPPMGKR) is disordered. The GH16 domain maps to 32–308 (ETRQGPPKPP…WVRAYRLVDV (277 aa)). Substrate is bound by residues Trp-73, Arg-76, Glu-168, Glu-173, and Glu-272. Glu-168 serves as the catalytic Nucleophile. The active-site Proton donor is Glu-173.

This sequence belongs to the glycosyl hydrolase 16 family.

The protein resides in the periplasm. The enzyme catalyses Hydrolysis of beta-D-galactopyranose-(1-&gt;4)-alpha-L-galactopyranose-6-sulfate linkages in porphyran.. Cleaves the sulfated polysaccharide porphyran at the (1-&gt;4) linkages between beta-D-galactopyranose and alpha-L-galactopyranose-6-sulfate, forming mostly the disaccharide alpha-L-galactopyranose-6-sulfate-(1-&gt;3)-beta-D-galactose. This chain is Beta-porphyranase D (porD), found in Zobellia galactanivorans (strain DSM 12802 / CCUG 47099 / CIP 106680 / NCIMB 13871 / Dsij).